The primary structure comprises 226 residues: UPF0173 metal-dependent hydrolase TM_1162 (226 aa).

Belongs to the UPF0173 family.

The chain is UPF0173 metal-dependent hydrolase TM_1162 from Thermotoga maritima (strain ATCC 43589 / DSM 3109 / JCM 10099 / NBRC 100826 / MSB8).